The chain runs to 727 residues: Pentatricopeptide repeat-containing protein At2g33680 (727 aa).

PPR repeat units lie at residues 13 to 47 (HTSTLLKKLTHHSQQRNLVAGRAVHGQIIRTGAST), 48 to 78 (CIQHANVLVNFYAKCGKLAKAHSIFNAIICK), 79 to 116 (DVVSWNSLITGYSQNGGISSSYTVMQLFREMRAQDILP), 117 to 150 (NAYTLAGIFKAESSLQSSTVGRQAHALVVKMSSF), 152 to 182 (DIYVDTSLVGMYCKAGLVEDGLKVFAYMPER), 183 to 213 (NTYTWSTMVSGYATRGRVEEAIKVFNLFLRE), 220 to 254 (SDYVFTAVLSSLAATIYVGLGRQIHCITIKNGLLG), 255 to 285 (FVALSNALVTMYSKCESLNEACKMFDSSGDR), 286 to 320 (NSITWSAMVTGYSQNGESLEAVKLFSRMFSAGIKP), 321 to 355 (SEYTIVGVLNACSDICYLEEGKQLHSFLLKLGFER), 356 to 386 (HLFATTALVDMYAKAGCLADARKGFDCLQER), 387 to 421 (DVALWTSLISGYVQNSDNEEALILYRRMKTAGIIP), 422 to 456 (NDPTMASVLKACSSLATLELGKQVHGHTIKHGFGL), 457 to 487 (EVPIGSALSTMYSKCGSLEDGNLVFRRTPNK), 488 to 522 (DVVSWNAMISGLSHNGQGDEALELFEEMLAEGMEP), 523 to 553 (DDVTFVNIISACSHKGFVERGWFYFNMMSDQ), and 559 to 593 (KVDHYACMVDLLSRAGQLKEAKEFIESANIDHGLC). The tract at residues 594 to 669 (LWRILLSACK…EVGCSWIELK (76 aa)) is type E motif. The tract at residues 670–700 (NQYHVFVVGDTMHPMIEETKDLVCLVSRQMI) is type E(+) motif.

Belongs to the PPR family. PCMP-E subfamily.

The sequence is that of Pentatricopeptide repeat-containing protein At2g33680 (PCMP-E19) from Arabidopsis thaliana (Mouse-ear cress).